A 161-amino-acid chain; its full sequence is Nucleotide-binding protein Geob_0921 (161 aa).

The protein belongs to the YajQ family.

Functionally, nucleotide-binding protein. This is Nucleotide-binding protein Geob_0921 from Geotalea daltonii (strain DSM 22248 / JCM 15807 / FRC-32) (Geobacter daltonii).